A 264-amino-acid polypeptide reads, in one-letter code: Endoglucanase S (264 aa).

An N-terminal signal peptide occupies residues 1–32; the sequence is MQTVNTQPHRIFRVLLPAVFSSLLLSSLTVSA.

Belongs to the glycosyl hydrolase 12 (cellulase H) family.

The enzyme catalyses Endohydrolysis of (1-&gt;4)-beta-D-glucosidic linkages in cellulose, lichenin and cereal beta-D-glucans.. The polypeptide is Endoglucanase S (celS) (Pectobacterium parmentieri).